Here is a 90-residue protein sequence, read N- to C-terminus: Probable Fe(2+)-trafficking protein (90 aa).

It belongs to the Fe(2+)-trafficking protein family.

In terms of biological role, could be a mediator in iron transactions between iron acquisition and iron-requiring processes, such as synthesis and/or repair of Fe-S clusters in biosynthetic enzymes. The protein is Probable Fe(2+)-trafficking protein of Variovorax paradoxus (strain S110).